Here is a 261-residue protein sequence, read N- to C-terminus: Acetoacetate decarboxylase 2 (261 aa).

The Schiff-base intermediate with acetoacetate role is filled by Lys116.

The protein belongs to the ADC family.

It catalyses the reaction acetoacetate + H(+) = acetone + CO2. Its function is as follows. Catalyzes the conversion of acetoacetate to acetone and carbon dioxide. This chain is Acetoacetate decarboxylase 2, found in Mesorhizobium japonicum (strain LMG 29417 / CECT 9101 / MAFF 303099) (Mesorhizobium loti (strain MAFF 303099)).